The following is a 476-amino-acid chain: MKLTLPDYDQASVLVVGDIMLDRYWYGPTGRISPEAPVPVVKVEQIEERPGGAANVAMNIAALGGHVHLVGLTGIDEPAKALNEKLTSLDVRCDFVSLPDYPTITKLRVMSRGQQMIRLDFEEGFHGVDKGLILPRLEQSLTHVKTVILSDYAKGALEHVSAMIKLARDAGKPVFIDPKGTDFERYRGATLLTPNLSEFELVAGKVTSDDELVEKGFELIERFDFEALLVTRSEHGMTLLQKGQAPLHLPTLAQEVYDVTGAGDTVISVLASSVAAGKSLADACKLANAAAGVVVAKLGTSTLSTIELTEAIYGSQDSGYGVIAETELKQAVSVARQRGETVVMTNGCFDILHAGHVAYLAEAAKLGDRLIVAVNSDSSVQGLKGPGRPVNPEDRRMAVLAGLGAVDWVVPFTEETPQRLISEILPSLLVKGGDYKPEDIAGGKEVIAAGGEVRVLSFEDGCSTSKIIEAIRGGKG.

Positions methionine 1–glycine 319 are ribokinase. Asparagine 195–glutamate 198 serves as a coordination point for ATP. The active site involves aspartate 264. Residues methionine 344–glycine 476 form a cytidylyltransferase region.

This sequence in the N-terminal section; belongs to the carbohydrate kinase PfkB family. It in the C-terminal section; belongs to the cytidylyltransferase family. Homodimer.

It carries out the reaction D-glycero-beta-D-manno-heptose 7-phosphate + ATP = D-glycero-beta-D-manno-heptose 1,7-bisphosphate + ADP + H(+). The catalysed reaction is D-glycero-beta-D-manno-heptose 1-phosphate + ATP + H(+) = ADP-D-glycero-beta-D-manno-heptose + diphosphate. It functions in the pathway nucleotide-sugar biosynthesis; ADP-L-glycero-beta-D-manno-heptose biosynthesis; ADP-L-glycero-beta-D-manno-heptose from D-glycero-beta-D-manno-heptose 7-phosphate: step 1/4. Its pathway is nucleotide-sugar biosynthesis; ADP-L-glycero-beta-D-manno-heptose biosynthesis; ADP-L-glycero-beta-D-manno-heptose from D-glycero-beta-D-manno-heptose 7-phosphate: step 3/4. In terms of biological role, catalyzes the phosphorylation of D-glycero-D-manno-heptose 7-phosphate at the C-1 position to selectively form D-glycero-beta-D-manno-heptose-1,7-bisphosphate. Catalyzes the ADP transfer from ATP to D-glycero-beta-D-manno-heptose 1-phosphate, yielding ADP-D-glycero-beta-D-manno-heptose. The protein is Bifunctional protein HldE of Photobacterium profundum (strain SS9).